The sequence spans 89 residues: Small ribosomal subunit protein uS15 (89 aa).

It belongs to the universal ribosomal protein uS15 family. In terms of assembly, part of the 30S ribosomal subunit. Forms a bridge to the 50S subunit in the 70S ribosome, contacting the 23S rRNA.

One of the primary rRNA binding proteins, it binds directly to 16S rRNA where it helps nucleate assembly of the platform of the 30S subunit by binding and bridging several RNA helices of the 16S rRNA. Its function is as follows. Forms an intersubunit bridge (bridge B4) with the 23S rRNA of the 50S subunit in the ribosome. This Nitrosospira multiformis (strain ATCC 25196 / NCIMB 11849 / C 71) protein is Small ribosomal subunit protein uS15.